A 222-amino-acid polypeptide reads, in one-letter code: MATARTARSRRKVRKVRDKWKEKVWYEIYATPEFGGVFIGYTPANDPSLVLGRVAETSLRDLTGDPTKHMHRVYFKIFGVTGNKAIAQYYGHDTTREFMKSQIRRRRSRIDAILDVKTQDGHKIRTKAMVLTAYRANTKQKSDIRKKMEEIIKAMAKEKTFPQYVQAMLFGEMAEKIKNECKKIFPIKNVIIYKSEVLSLAKKEENEGFVKEAEEETAEAQE.

Belongs to the eukaryotic ribosomal protein eS1 family.

The sequence is that of Small ribosomal subunit protein eS1 from Methanocaldococcus jannaschii (strain ATCC 43067 / DSM 2661 / JAL-1 / JCM 10045 / NBRC 100440) (Methanococcus jannaschii).